A 62-amino-acid chain; its full sequence is Large ribosomal subunit protein bL28 (62 aa).

Belongs to the bacterial ribosomal protein bL28 family.

This Helicobacter pylori (strain Shi470) protein is Large ribosomal subunit protein bL28.